The sequence spans 209 residues: Uracil phosphoribosyltransferase (209 aa).

Residues Arg79, Arg104, and Asp131 to Ser139 each bind 5-phospho-alpha-D-ribose 1-diphosphate. Residues Val194 and Gly199–Ala201 contribute to the uracil site. A 5-phospho-alpha-D-ribose 1-diphosphate-binding site is contributed by Asp200.

Belongs to the UPRTase family. Mg(2+) serves as cofactor.

The catalysed reaction is UMP + diphosphate = 5-phospho-alpha-D-ribose 1-diphosphate + uracil. Its pathway is pyrimidine metabolism; UMP biosynthesis via salvage pathway; UMP from uracil: step 1/1. With respect to regulation, allosterically activated by GTP. In terms of biological role, catalyzes the conversion of uracil and 5-phospho-alpha-D-ribose 1-diphosphate (PRPP) to UMP and diphosphate. The protein is Uracil phosphoribosyltransferase of Clostridium botulinum (strain ATCC 19397 / Type A).